The following is a 626-amino-acid chain: MAVLPLLLCLLPLAPASSPPQPATSSPCPRRCRCQTQSLPLSVLCPGAGLLFVPPSLDRRAAELRLADNFIAAVRRRDLANMTGLLHLSLSRNTIRHVAAGAFADLRALRALHLDGNRLTSLGEGQLRGLVNLRHLILSNNQLAALAAGALDDCAETLEDLDLSYNNLEQLPWEALGRLGNVNTLGLDHNLLASVPAGAFSRLHKLARLDMTSNRLTTIPPDPLFSRLPLLARPRGSPASALVLAFGGNPLHCNCELVWLRRLAREDDLEACASPPALGGRYFWAVGEEEFVCEPPVVTHRSPPLAVPAGRPAALRCRAVGDPEPRVRWVSPQGRLLGNSSRARAFPNGTLELLVTEPEDGGTFTCIAANAAGEATAAVELTVGPPPPPQLANSTSCDPPRDGEPDALTPPSAASASAKVADTVAPTDRGVQVTEHGATAALVQWPDQRPVPGIRMYQIQYNSSADDILVYRMIPADSRSFLLTDLASGRTYDLCVLAVYEDSATGLTATRPVGCARFSTEPALRPCAAPHAPFLGGTMIIALGGVIVASVLVFIFVLLLRYKVHGVQPPGKAKATAPVSSVCSQTNGALGPVPSAPAPEPAAPRAHTVVQLDCEPWGPSHEPAGP.

The signal sequence occupies residues 1-16; the sequence is MAVLPLLLCLLPLAPA. Residues 17–539 lie on the Extracellular side of the membrane; it reads SSPPQPATSS…PHAPFLGGTM (523 aa). The LRRNT domain occupies 19–59; sequence PPQPATSSPCPRRCRCQTQSLPLSVLCPGAGLLFVPPSLDR. LRR repeat units lie at residues 84-105, 108-129, 132-153, 157-178, 181-202, and 205-226; these read GLLH…AFAD, ALRA…QLRG, NLRH…ALDD, TLED…ALGR, NVNT…AFSR, and KLAR…PLFS. One can recognise an LRRCT domain in the interval 249-295; sequence NPLHCNCELVWLRRLAREDDLEACASPPALGGRYFWAVGEEEFVCEP. An Ig-like domain is found at 295-382; the sequence is PPVVTHRSPP…GEATAAVELT (88 aa). One can recognise a Fibronectin type-III 1 domain in the interval 308–395; it reads PAGRPAALRC…PPPPQLANST (88 aa). A disulfide bridge links Cys-317 with Cys-366. 3 N-linked (GlcNAc...) asparagine glycosylation sites follow: Asn-339, Asn-348, and Asn-393. The tract at residues 382 to 423 is disordered; it reads TVGPPPPPQLANSTSCDPPRDGEPDALTPPSAASASAKVADT. Residues 406–423 are compositionally biased toward low complexity; it reads DALTPPSAASASAKVADT. Residues 425-523 form the Fibronectin type-III 2 domain; that stretch reads APTDRGVQVT…GCARFSTEPA (99 aa). The helical transmembrane segment at 540-560 threads the bilayer; that stretch reads IIALGGVIVASVLVFIFVLLL. The Cytoplasmic portion of the chain corresponds to 561 to 626; it reads RYKVHGVQPP…WGPSHEPAGP (66 aa).

It belongs to the LRFN family. In terms of assembly, can form heteromeric complexes with LRFN1, LRFN2, LRFN4 and LRFN5. Able to form homomeric complexes across cell junctions, between adjacent cells. Does not interact with DLG4. In terms of processing, N-glycosylated. In terms of tissue distribution, expressed in brain. Within brain, expressed in hippocampus, cerebellum, olfactory bulb and forebrain (at protein level).

It is found in the cell membrane. The protein resides in the cell projection. Its subcellular location is the axon. It localises to the dendrite. The protein localises to the synapse. It is found in the presynaptic cell membrane. The protein resides in the postsynaptic cell membrane. Functionally, cell adhesion molecule that mediates homophilic cell-cell adhesion in a Ca(2+)-independent manner. Promotes neurite outgrowth in hippocampal neurons. This is Leucine-rich repeat and fibronectin type-III domain-containing protein 3 from Rattus norvegicus (Rat).